We begin with the raw amino-acid sequence, 240 residues long: Probable transcriptional regulatory protein HPP12_0160 (240 aa).

The protein belongs to the TACO1 family.

The protein resides in the cytoplasm. The polypeptide is Probable transcriptional regulatory protein HPP12_0160 (Helicobacter pylori (strain P12)).